The chain runs to 149 residues: Histone H3-like 1 (149 aa).

The span at 1-19 (MARPRKEAPQRNLDRDENA) shows a compositional bias: basic and acidic residues. The tract at residues 1-58 (MARPRKEAPQRNLDRDENARQQPTEEPQDEAPRNQGRQQQQQRPPAAPRRPRRFRPGT) is disordered. Positions 33–44 (RNQGRQQQQQRP) are enriched in low complexity.

This sequence belongs to the histone H3 family. In terms of assembly, the nucleosome is a histone octamer containing two molecules each of H2A, H2B, H3 and H4 assembled in one H3-H4 heterotetramer and two H2A-H2B heterodimers. The octamer wraps approximately 147 bp of DNA. Pollen specific.

The protein resides in the nucleus. Its subcellular location is the chromosome. Its function is as follows. Core component of nucleosome. Nucleosomes wrap and compact DNA into chromatin, limiting DNA accessibility to the cellular machineries which require DNA as a template. Histones thereby play a central role in transcription regulation, DNA repair, DNA replication and chromosomal stability. DNA accessibility is regulated via a complex set of post-translational modifications of histones, also called histone code, and nucleosome remodeling. This chain is Histone H3-like 1 (gH3), found in Lilium longiflorum (Trumpet lily).